The chain runs to 238 residues: Orotidine 5'-phosphate decarboxylase (238 aa).

Substrate-binding positions include D13, K35, 62 to 71 (DLKFHDIPNT), T121, R182, Q191, G211, and R212. K64 acts as the Proton donor in catalysis.

Belongs to the OMP decarboxylase family. Type 1 subfamily. Homodimer.

The enzyme catalyses orotidine 5'-phosphate + H(+) = UMP + CO2. The protein operates within pyrimidine metabolism; UMP biosynthesis via de novo pathway; UMP from orotate: step 2/2. In terms of biological role, catalyzes the decarboxylation of orotidine 5'-monophosphate (OMP) to uridine 5'-monophosphate (UMP). The chain is Orotidine 5'-phosphate decarboxylase from Saccharophagus degradans (strain 2-40 / ATCC 43961 / DSM 17024).